Consider the following 172-residue polypeptide: Translation initiation factor IF-3 (172 aa).

The protein belongs to the IF-3 family. Monomer.

It localises to the cytoplasm. IF-3 binds to the 30S ribosomal subunit and shifts the equilibrium between 70S ribosomes and their 50S and 30S subunits in favor of the free subunits, thus enhancing the availability of 30S subunits on which protein synthesis initiation begins. The protein is Translation initiation factor IF-3 of Bartonella henselae (strain ATCC 49882 / DSM 28221 / CCUG 30454 / Houston 1) (Rochalimaea henselae).